A 354-amino-acid polypeptide reads, in one-letter code: Cellular communication network factor 6 (354 aa).

The signal sequence occupies residues 1–23 (MRRLLFCTLLMTGLTQLCCRTQG). The 74-residue stretch at 44-117 (RTEVCRWPCR…RYETGVCAYL (74 aa)) folds into the IGFBP N-terminal domain. 13 cysteine pairs are disulfide-bonded: cysteine 48-cysteine 72, cysteine 52-cysteine 74, cysteine 54-cysteine 75, cysteine 61-cysteine 78, cysteine 86-cysteine 100, cysteine 92-cysteine 114, cysteine 209-cysteine 238, cysteine 219-cysteine 223, cysteine 247-cysteine 252, cysteine 268-cysteine 305, cysteine 285-cysteine 319, cysteine 296-cysteine 335, and cysteine 299-cysteine 337. One can recognise a TSP type-1 domain in the interval 208–253 (KCLVQATKWTPCSRTCGMGISNRVTNDNANCEMRKERRLCYIQPCS). The 75-residue stretch at 268-342 (CQPTFQLPKA…TSCVCQRDCR (75 aa)) folds into the CTCK domain. Asparagine 308 carries an N-linked (GlcNAc...) asparagine glycan.

It belongs to the CCN family.

The protein localises to the secreted. It is found in the mitochondrion. In terms of biological role, plays a role in mitochondrial electron transport and mitochondrial respiration. The polypeptide is Cellular communication network factor 6 (Mus musculus (Mouse)).